A 387-amino-acid chain; its full sequence is Protein phosphatase 2C 50 (387 aa).

The 318-residue stretch at 60-377 (VWGCASTRGR…DNITVIVVDL (318 aa)) folds into the PPM-type phosphatase domain. Aspartate 118 and glycine 119 together coordinate Mn(2+). Residues 264–268 (VSGIL) carry the Modulates binding affinity to PYR/PYL/RCAR abscisic acid intracellular receptors motif. The Mn(2+) site is built by aspartate 306 and aspartate 368.

This sequence belongs to the PP2C family. As to quaternary structure, interacts with PYL3, PYL5, PYL9 and PYL10. Binding to PYL3, PYL5, PYL9 and PYL10 is dependent on the presence of abscisic acid (ABA). Interacts with SAPK10. Requires Mg(2+) as cofactor. It depends on Mn(2+) as a cofactor.

It carries out the reaction O-phospho-L-seryl-[protein] + H2O = L-seryl-[protein] + phosphate. The enzyme catalyses O-phospho-L-threonyl-[protein] + H2O = L-threonyl-[protein] + phosphate. Protein phosphatase involved in abscisic acid (ABA) signaling. Together with PYL3 and SAPK10, may form an ABA signaling module involved in stress response. This chain is Protein phosphatase 2C 50, found in Oryza sativa subsp. japonica (Rice).